We begin with the raw amino-acid sequence, 376 residues long: 23S rRNA (uracil(747)-C(5))-methyltransferase RlmC (376 aa).

The [4Fe-4S] cluster site is built by Cys-3, Cys-11, Cys-14, and Cys-87. Positions 212, 241, 262, and 307 each coordinate S-adenosyl-L-methionine. Cys-334 serves as the catalytic Nucleophile.

This sequence belongs to the class I-like SAM-binding methyltransferase superfamily. RNA M5U methyltransferase family. RlmC subfamily.

It carries out the reaction uridine(747) in 23S rRNA + S-adenosyl-L-methionine = 5-methyluridine(747) in 23S rRNA + S-adenosyl-L-homocysteine + H(+). In terms of biological role, catalyzes the formation of 5-methyl-uridine at position 747 (m5U747) in 23S rRNA. The sequence is that of 23S rRNA (uracil(747)-C(5))-methyltransferase RlmC from Yersinia pestis bv. Antiqua (strain Antiqua).